A 109-amino-acid polypeptide reads, in one-letter code: uncharacterized protein (109 aa).

It is found in the mitochondrion. This is an uncharacterized protein from Saccharomyces cerevisiae (strain ATCC 204508 / S288c) (Baker's yeast).